Reading from the N-terminus, the 387-residue chain is Putative actin-29 (387 aa).

Belongs to the actin family.

The protein localises to the cytoplasm. Its subcellular location is the cytoskeleton. The enzyme catalyses ATP + H2O = ADP + phosphate + H(+). Actins are highly conserved proteins that are involved in various types of cell motility and are ubiquitously expressed in all eukaryotic cells. Multiple isoforms are involved in various cellular functions such as cytoskeleton structure, cell mobility, chromosome movement and muscle contraction. In Dictyostelium discoideum (Social amoeba), this protein is Putative actin-29 (act29).